Reading from the N-terminus, the 947-residue chain is Glutamate receptor 2.8 (947 aa).

A signal peptide spans 1–26; that stretch reads MNPKKNNNTFLSYFVCLFLLLEVGLG. At 27 to 577 the chain is on the extracellular side; sequence QNQISEIKVG…NTWVFLKPWG (551 aa). Asn42, Asn118, Asn333, Asn341, Asn348, Asn420, Asn478, and Asn524 each carry an N-linked (GlcNAc...) asparagine glycan. A helical membrane pass occupies residues 578–598; that stretch reads LDLWVTTACFFVLIGFVVWLF. Over 599 to 607 the chain is Cytoplasmic; that stretch reads EHRVNTDFR. The chain crosses the membrane as a helical span at residues 608 to 628; that stretch reads GPPHHQIGTSFWFSFSTMVFA. At 629–632 the chain is on the cytoplasmic side; sequence HREK. A helical transmembrane segment spans residues 633–653; the sequence is VVSNLARFVVVVWCFVVLVLT. At 654–819 the chain is on the extracellular side; that stretch reads QSYTANLTSF…NRLSLRSFWG (166 aa). N-linked (GlcNAc...) asparagine glycosylation is found at Asn659, Asn704, Asn723, and Asn779. The chain crosses the membrane as a helical span at residues 820–840; the sequence is LFLIAGIASFLALLIFVFLFL. Over 841 to 947 the chain is Cytoplasmic; the sequence is YENRHTLCDD…ESDIECVVEQ (107 aa).

The protein belongs to the glutamate-gated ion channel (TC 1.A.10.1) family. May form heteromers. In terms of tissue distribution, expressed predominantly in leaves.

The protein resides in the membrane. In terms of biological role, glutamate-gated receptor that probably acts as a non-selective cation channel. May be involved in light-signal transduction and calcium homeostasis via the regulation of calcium influx into cells. This is Glutamate receptor 2.8 (GLR2.8) from Arabidopsis thaliana (Mouse-ear cress).